We begin with the raw amino-acid sequence, 923 residues long: Protein translocase subunit SecA (923 aa).

Residues Gln-86, 104–108 (GEGKT), and Asp-512 each bind ATP. Cys-906, Cys-908, Cys-917, and His-918 together coordinate Zn(2+).

It belongs to the SecA family. In terms of assembly, monomer and homodimer. Part of the essential Sec protein translocation apparatus which comprises SecA, SecYEG and auxiliary proteins SecDF-YajC and YidC. Zn(2+) is required as a cofactor.

It localises to the cell inner membrane. Its subcellular location is the cytoplasm. It catalyses the reaction ATP + H2O + cellular proteinSide 1 = ADP + phosphate + cellular proteinSide 2.. In terms of biological role, part of the Sec protein translocase complex. Interacts with the SecYEG preprotein conducting channel. Has a central role in coupling the hydrolysis of ATP to the transfer of proteins into and across the cell membrane, serving both as a receptor for the preprotein-SecB complex and as an ATP-driven molecular motor driving the stepwise translocation of polypeptide chains across the membrane. This Caulobacter vibrioides (strain ATCC 19089 / CIP 103742 / CB 15) (Caulobacter crescentus) protein is Protein translocase subunit SecA.